The following is a 581-amino-acid chain: Lipoprotein LpqB (581 aa).

Positions 1–23 (MRNHVSRYLTALIAVGCAATTAA) are cleaved as a signal peptide. The N-palmitoyl cysteine moiety is linked to residue Cys24. Cys24 carries the S-diacylglycerol cysteine lipid modification.

It belongs to the LpqB lipoprotein family.

It localises to the cell membrane. This chain is Lipoprotein LpqB, found in Corynebacterium diphtheriae (strain ATCC 700971 / NCTC 13129 / Biotype gravis).